The primary structure comprises 2554 residues: MDSVSRGAVASTTGGAVEEPEYLARYLVVKHSWRGRYKRILCISSGGIVTLDPNTLAVTNSYDTGSNFDGASPLVGRDENTESVGGEFTVNVRTDGKGKFKAMKFSSRCRASILTELYRLRWNQIRPVAEFQVLHLRRRNAEWVPYKLKITFVGLELVDSKSGNSRWILDFRDMGSPAIILLSDAYRTKSADSAGFVLCPMYGRKSKAFRAAPGTTNSSIVASLAKTAKSMVGVFLSVDDSQLLTVSEYMTRRAKEAVGAEETPNGWWSVTRLRSAAHGTLNMPGLSLAIGPKGGLGEHGDAVALQLILTKASLVERRIDNYEVVIVRPLSSVSSLVRFAEEPQMFAIEFSDGCPVLVYASISRDNLLAAILDTLQTEGHCPIPVLPRLTMPGHRIDPPCGRVSLISGPQHLVADLETCSLHLKHLAAAAKDAVAEGGSVPGCRARLWRRIREFNACIPYTGVPANSEVPEVTLMALITMLPSTPNLPVDAPPLPPPSPKAAATVIGFVTCLRRLLSSRSAASHIMSFPAAVNRIMGLLRNGSEGVAAEAAGLIASLIGGWSADLSTAPDSRGEKHATIMHTKSVLFAQQGYVTILVNRLKPMSVSPLFSMAIVEVFEAMVCDPHGETTQYTVFVELLRQIAALRRRLFALFAHPAESVRETIAVIMRTIAEEDAIAAESMRDAALRDGALLRHLLNAFSLPASERREVSRQLVALWADSYQPALDLLSRVLPPGLVAYLHTRPDDVVDDTDQEGSSTNRRQKRLLQQRRGRIAKGMGAQDIPLPPGNNVEAGDAAKHMSANASVPDNFQRRAADSSSEASNPQASAFPGVDSTIAGVSQNGYPAFASVTTNANGHEQPETNASDVVGSDPNLYGIQNSVLPAPAQVIVESTAVGSGKLLLNWREFWRAFGLDHNRADLIWNERTRQELIEALKAEVHNLDVEKERTEDISPGDVEATTGQEIIPRISWNYSEFSVSYRSLSKEVCVGQYYLRLLLESGNAGKAQDFPLRDPVAFFRALYHRFQCDADMGLTIDGAVPDELGSSGDWCDMSRLDGFGGGGGASVRELCARAMAIVYEQHYNTIGPFEGTAHITALIDRTNDRALRHRLLLLLKALVKVLLNVEGCVVVGGCVLAVDLLTVVHENSERTPIPLQSNLIAATAFMEPPKEWMYIDKGGAEVGPVEKDVIRSLWSKKDIDWTTKCRALGMSDWKKLRDIRELRWAVAVRVPVLTPSQVGDAALSILHSMVSAHSDLDDAGEIVTPTPRVKRILSSTRCLPHIAQALLSGEPVIVEAGAALLKDVVTRNSKAMIRLYSTGAFYFALAYPGSNLYSIAQLFSVTHVHQAFHGGEEATVSSSLPLAKRSVLGGLLPESLLYVLERSGPAAFAAGMVSDSDTPEIIWTHKMRAENLICQVLQHLGDYPQKLSQHCHSLYDYAPMPPVTYPELRDEMWCHRYYLRNLCDEIQFPNWPIVEHVEFLQSLLVMWREELTRKPMDLSEGEACKILEISLNNVSSDDLNRTASVELNEEISNISKQIQNLDEEKLKRQYRKLAMRYHPDKNPEGREKFLAVQKAYECLQATMQGLQGPQPWRLLLLLKAQCILYRRYGHVLRPFKYAGYPMLLDAVTVDKDDNNFLSNDRSPLLVAASELVSLTCAASSLNGEELVRDGGVQLLSTLLSRCMCVVQPTTSQHEPAAIIVTNVMRTLSVISQFESARAGFLELPSLIEDIVHCTELERVPAAVDAALQSIAKVSVFPELQHGLLKAGALWYILPLLLQYDSTAEESNSVESHGVGVSIQIAKNEHALQASQALSRLTGLCADESLTPYNATAADVLKALLTPKLASLLKDEVAKDLLSKLNTNLETPEIIWNSATRSELLNFVDEQRACQCPDGSYDLKNAQSFSYDALSKEVFVGNVYLKVYNDQPDSEISEPESFCNALIDFISSLVHTELPSVSEDQNLIEDRNSSNDTPELQSSVAEPSLIEEHSDHQPSSEGMKNEECFLIDHLQLGLTALQNLLTKYPDLASVFSSKERLLPLFECFSVAIASKTDIPKLCLNVLSRLTAYAPCLETMVSDGSSLLLLLQMLHSAPSFREGALHVLYALASTPELAWAAAKHGGVVYILELLLPLQKEIPLQQRAAAASLLGKLVAQPMHGPRVAITLVRFLPDGLVSIIRDGPGEAVVHALERTTETPELVWTPAMAASLSAQIATMASDIYREQQKGSVIEWDVPEQSAGQQEMRDEPQVGGIYVRRFLKDPKFPLRNPKRFLEGLLDQYLSAMAATHYEQHPVDPELPLLLSAALVSLLRVHPALADHIGHLGYVPKLVAAVAYEGRRETMSSGEVKAEEIGSDGVNESTDPSSLPGQTPQERVRLSCLRVLHQLAASTTCAEAMAATSAGNAQVVPLLMKAIGWLGGSILALETLKRVVVAGNRARDALVAQGLKVGLIEVLLGLLDWRTGGRYGLSSHMKWNESEASIGRVLAVEVLHGFATEGAHCSKVREILDASEVWSAYKDQKHDLFLPSNTQSAAGVAGFIENSSNSLTYALTAPPPPSHP.

Disordered regions lie at residues Asp-746–Leu-766 and Gln-810–Ser-833. Over residues Asp-815–Ala-825 the composition is skewed to polar residues. Coiled coils occupy residues Thr-925 to Ser-951 and Arg-1518 to Gln-1546. The J domain occupies Leu-1524–Gly-1606. Disordered regions lie at residues Ile-1960 to Gly-1994 and Ser-2339 to Pro-2366. The segment covering Ser-1966–Ala-1977 has biased composition (polar residues). Residues Ile-1982–Gly-1994 are compositionally biased toward basic and acidic residues. Over residues Val-2352–Pro-2366 the composition is skewed to polar residues.

As to expression, constitutively expressed in roots, hypocotyls, leaves (e.g. vascular tissues), stems, flowers (e.g. petals and stigmas), siliques and pollen.

The protein localises to the endosome membrane. Required for endosome formation, vacuolar protein sorting and determination of the embryo growth axis. Necessary for the transport of proteins into protein storage vacuoles (PSVs). Participates in vesicle trafficking from the endosome to the central vacuole. Involved in the regulation of shoot phototropism and gravitropism, probably through the positioning of specialized amyloplasts (statoliths) in endodermal cells. In Arabidopsis thaliana (Mouse-ear cress), this protein is DnaJ homolog subfamily C GRV2 (GRV2).